Consider the following 333-residue polypeptide: Mevalonate kinase (333 aa).

An ATP-binding site is contributed by 109–119; the sequence is PVGAGLGSSAA. Aspartate 160 (proton acceptor) is an active-site residue.

Belongs to the GHMP kinase family. Mevalonate kinase subfamily. Homodimer. Mg(2+) serves as cofactor.

It is found in the cytoplasm. The catalysed reaction is (R)-mevalonate + ATP = (R)-5-phosphomevalonate + ADP + H(+). Its pathway is isoprenoid biosynthesis; isopentenyl diphosphate biosynthesis via mevalonate pathway; isopentenyl diphosphate from (R)-mevalonate: step 1/3. Catalyzes the phosphorylation of (R)-mevalonate (MVA) to (R)-mevalonate 5-phosphate (MVAP). Functions in the mevalonate (MVA) pathway leading to isopentenyl diphosphate (IPP), a key precursor for the biosynthesis of isoprenoid compounds such as archaeal membrane lipids. The chain is Mevalonate kinase from Thermococcus sibiricus (strain DSM 12597 / MM 739).